The following is a 284-amino-acid chain: Tripartite motif-containing protein 12A (284 aa).

An RING-type zinc finger spans residues 15 to 59; it reads CPVCLNLMVKPVSADCGHTFCQGCITLYFESIKCDKKVFICPVCR. The B box-type zinc finger occupies 91 to 132; that stretch reads QKVFNCARHGKKLQLFCRKDMMAICWLCERSQEHRGHKTALI. Residues cysteine 96, histidine 99, cysteine 118, and histidine 124 each coordinate Zn(2+). Residues 130–234 are a coiled coil; that stretch reads ALIEEVAQEY…QSKLLEDFIS (105 aa).

Belongs to the TRIM/RBCC family. Expressed in embryonic CNS, liver, kidney, olfactory epithelium.

Its subcellular location is the cytoplasm. In Mus musculus (Mouse), this protein is Tripartite motif-containing protein 12A (Trim12a).